Here is a 37-residue protein sequence, read N- to C-terminus: Cytochrome b6-f complex subunit 5 (37 aa).

A helical membrane pass occupies residues 5 to 25 (LLSGIVLGLIPITLAGLFVTA).

The protein belongs to the PetG family. As to quaternary structure, the 4 large subunits of the cytochrome b6-f complex are cytochrome b6, subunit IV (17 kDa polypeptide, PetD), cytochrome f and the Rieske protein, while the 4 small subunits are PetG, PetL, PetM and PetN. The complex functions as a dimer.

It localises to the plastid. The protein localises to the chloroplast thylakoid membrane. Functionally, component of the cytochrome b6-f complex, which mediates electron transfer between photosystem II (PSII) and photosystem I (PSI), cyclic electron flow around PSI, and state transitions. PetG is required for either the stability or assembly of the cytochrome b6-f complex. This is Cytochrome b6-f complex subunit 5 from Cryptomeria japonica (Japanese cedar).